We begin with the raw amino-acid sequence, 458 residues long: Kelch repeat and BTB domain-containing protein 13 (458 aa).

In terms of domain architecture, BTB spans 7 to 74; it reads VPVQVWVDGQ…LRGERPALAA (68 aa). Kelch repeat units lie at residues 159–209, 210–258, 259–305, 307–350, and 352–400; these read AVST…TLGN, KLYI…GFEG, RLYA…QARG, LFVC…VAHR, and SLYV…VVRG.

In terms of assembly, component of the BCR(KBTBD13) E3 ubiquitin ligase complex, at least composed of CUL3 and KBTBD13 and RBX1. Interacts with CUL3. Post-translationally, autoubiquitinated. As to expression, expressed in skeletal muscle, heart and lung.

The protein resides in the cytoplasm. Its pathway is protein modification; protein ubiquitination. Substrate-specific adapter of a BCR (BTB-CUL3-RBX1) E3 ubiquitin ligase complex. The polypeptide is Kelch repeat and BTB domain-containing protein 13 (Kbtbd13) (Mus musculus (Mouse)).